Consider the following 317-residue polypeptide: WD repeat-containing protein 82 (317 aa).

WD repeat units follow at residues 21-60, 107-146, 148-186, 194-233, 238-278, and 282-317; these read ENTDKINAIDFAPNGEHLISCSEDDQIVIYDCEKGTQSRT, GHTKKVISLCISPVEDTFLSGSLDKTLRLWDLRSPNCQGL, HLSGRPIAAYDPEGLIFAAGVNSESIKLYDLRSFDKGPF, EKECDWTGLKFSRDGKTILISTNGSVIRLVDAFHGTPLQT, PNNK…KVSV, and DHPGPVQCVQFNPKYMMLASACTNMAFWLPTSEEGL.

This sequence belongs to the WD repeat SWD2 family. Component of the SET1 complex, composed at least of the catalytic subunit Set1, wds/WDR5, Wdr82, Rbbp5, ash2, Cfp1/CXXC1, hcf and Dpy-30L1. Interacts with male-specific lethal (MSL) histone acetyltransferase complex at least composed of mof, msl-1, msl-2 and msl-3. Interacts with su(sable).

The protein resides in the nucleus. Its function is as follows. Component of the SET1 complex that specifically di- and trimethylates 'Lys-4' of histone H3. Together with su(sable), part of a transcription termination checkpoint that promotes transcription termination of aberrant RNAs and their subsequent degradation by the nuclear exosome. This Drosophila melanogaster (Fruit fly) protein is WD repeat-containing protein 82.